Consider the following 102-residue polypeptide: 10 kDa heat shock protein, mitochondrial (102 aa).

Alanine 2 is subject to N-acetylalanine. Lysine 8 carries the N6-acetyllysine modification. Lysine 28 bears the N6-succinyllysine mark. Lysine 40 bears the N6-acetyllysine; alternate mark. N6-malonyllysine; alternate is present on residues lysine 40, lysine 54, and lysine 56. Residues lysine 40, lysine 54, lysine 56, lysine 66, and lysine 70 each carry the N6-succinyllysine; alternate modification. An N6-acetyllysine; alternate mark is found at lysine 56, lysine 66, and lysine 70. Position 79 is a phosphothreonine (threonine 79). N6-acetyllysine; alternate occurs at positions 80 and 86. N6-succinyllysine; alternate occurs at positions 80 and 86. Lysine 99 bears the N6-acetyllysine mark.

Belongs to the GroES chaperonin family. In terms of assembly, homoheptamer arranged in a ring structure. 2 heptameric Hsp10 rings interact with a Hsp60 tetradecamer in the structure of a back-to-back double heptameric ring to form the symmetrical football complex.

Its subcellular location is the mitochondrion matrix. Functionally, co-chaperonin implicated in mitochondrial protein import and macromolecular assembly. Together with Hsp60, facilitates the correct folding of imported proteins. May also prevent misfolding and promote the refolding and proper assembly of unfolded polypeptides generated under stress conditions in the mitochondrial matrix. The functional units of these chaperonins consist of heptameric rings of the large subunit Hsp60, which function as a back-to-back double ring. In a cyclic reaction, Hsp60 ring complexes bind one unfolded substrate protein per ring, followed by the binding of ATP and association with 2 heptameric rings of the co-chaperonin Hsp10. This leads to sequestration of the substrate protein in the inner cavity of Hsp60 where, for a certain period of time, it can fold undisturbed by other cell components. Synchronous hydrolysis of ATP in all Hsp60 subunits results in the dissociation of the chaperonin rings and the release of ADP and the folded substrate protein. The polypeptide is 10 kDa heat shock protein, mitochondrial (Hspe1) (Rattus norvegicus (Rat)).